A 21-amino-acid polypeptide reads, in one-letter code: Thylakoid lumenal 13.8 kDa protein (21 aa).

It is found in the plastid. It localises to the chloroplast thylakoid lumen. The chain is Thylakoid lumenal 13.8 kDa protein from Spinacia oleracea (Spinach).